We begin with the raw amino-acid sequence, 131 residues long: Prefoldin subunit beta (131 aa).

Disordered regions lie at residues 19–41 and 112–131; these read LQET…RESE and LQGG…AGGA. Low complexity predominate over residues 20–35; the sequence is QETAQQVAQQKQQAET. The span at 114 to 131 shows a compositional bias: gly residues; that stretch reads GGAGGGPMGPGGPGAGGA.

It belongs to the prefoldin subunit beta family. In terms of assembly, heterohexamer of two alpha and four beta subunits.

It localises to the cytoplasm. Functionally, molecular chaperone capable of stabilizing a range of proteins. Seems to fulfill an ATP-independent, HSP70-like function in archaeal de novo protein folding. This is Prefoldin subunit beta from Natronomonas pharaonis (strain ATCC 35678 / DSM 2160 / CIP 103997 / JCM 8858 / NBRC 14720 / NCIMB 2260 / Gabara) (Halobacterium pharaonis).